The sequence spans 187 residues: dTTP/UTP pyrophosphatase (187 aa).

D68 functions as the Proton acceptor in the catalytic mechanism.

It belongs to the Maf family. YhdE subfamily. It depends on a divalent metal cation as a cofactor.

It localises to the cytoplasm. The catalysed reaction is dTTP + H2O = dTMP + diphosphate + H(+). It carries out the reaction UTP + H2O = UMP + diphosphate + H(+). Nucleoside triphosphate pyrophosphatase that hydrolyzes dTTP and UTP. May have a dual role in cell division arrest and in preventing the incorporation of modified nucleotides into cellular nucleic acids. In Thermus thermophilus (strain ATCC BAA-163 / DSM 7039 / HB27), this protein is dTTP/UTP pyrophosphatase.